Here is a 90-residue protein sequence, read N- to C-terminus: Conotoxin Rg9.1 (90 aa).

The first 20 residues, 1–20 (MHLSLARSAVLILLLLFALG), serve as a signal peptide directing secretion. The propeptide occupies 21–60 (NFVGVQPGQITRDADHGINLRSLRKQMSRSPLVKGAFCGQ). Disulfide bonds link C58/C71, C62/C73, and C67/C80.

Belongs to the conotoxin P superfamily. As to expression, expressed by the venom duct.

The protein resides in the secreted. Probable neurotoxin that inhibits ion channels. This Conus regius (Crown cone) protein is Conotoxin Rg9.1.